The sequence spans 115 residues: Anamorsin homolog 1 (115 aa).

The interval 30-115 is disordered; the sequence is VKEATKGEDC…KVKLNLTDDI (86 aa). Positions 39, 46, 49, and 51 each coordinate [2Fe-2S] cluster. A fe-S binding site A region spans residues 39-51; it reads CTTRRRACKNCTC. Cys-77, Cys-80, Cys-88, and Cys-91 together coordinate [4Fe-4S] cluster. Short sequence motifs (cx2C motif) lie at residues 77-80 and 88-91; these read CGNC and CATC. Positions 77–91 are fe-S binding site B; sequence CGNCAKGDAFRCATC.

Belongs to the anamorsin family. Monomer. Requires [2Fe-2S] cluster as cofactor. The cofactor is [4Fe-4S] cluster.

The protein localises to the cytoplasm. It localises to the mitochondrion intermembrane space. Component of the cytosolic iron-sulfur (Fe-S) protein assembly (CIA) machinery. Required for the maturation of extramitochondrial Fe-S proteins. Part of an electron transfer chain functioning in an early step of cytosolic Fe-S biogenesis, facilitating the de novo assembly of a [4Fe-4S] cluster on the cytosolic Fe-S scaffold complex. Electrons are transferred from NADPH via a FAD- and FMN-containing diflavin oxidoreductase. Together with the diflavin oxidoreductase, also required for the assembly of the diferric tyrosyl radical cofactor of ribonucleotide reductase (RNR), probably by providing electrons for reduction during radical cofactor maturation in the catalytic small subunit. This chain is Anamorsin homolog 1, found in Trypanosoma cruzi (strain CL Brener).